Reading from the N-terminus, the 324-residue chain is Malate dehydrogenase (324 aa).

Residues 10–15 (GAGAVG) and Asp34 contribute to the NAD(+) site. Positions 88 and 94 each coordinate substrate. NAD(+)-binding positions include Asn101 and 124–126 (VTN). Residues Asn126 and Arg157 each contribute to the substrate site. His181 (proton acceptor) is an active-site residue.

It belongs to the LDH/MDH superfamily.

The enzyme catalyses (S)-malate + NAD(+) = oxaloacetate + NADH + H(+). In terms of biological role, catalyzes the reversible oxidation of malate to oxaloacetate. The chain is Malate dehydrogenase (mdh) from Picrophilus torridus (strain ATCC 700027 / DSM 9790 / JCM 10055 / NBRC 100828 / KAW 2/3).